Reading from the N-terminus, the 677-residue chain is Probable potassium transport system protein Kup (677 aa).

A run of 12 helical transmembrane segments spans residues 13–33 (GALI…LYTM), 54–74 (VSLV…IIAL), 98–118 (WLLL…TLTP), 137–157 (FIFP…LLIV), 171–191 (IFGP…LVNI), 217–237 (TGIF…ALYS), 249–269 (VSWI…GAWI), 296–316 (IFGV…LISG), 345–365 (MYIG…VWAF), 374–394 (AYGL…YQFI), 402–422 (ILAF…LIAS), and 429–449 (GGYA…IWFY).

The protein belongs to the HAK/KUP transporter (TC 2.A.72) family.

The protein localises to the cell membrane. It carries out the reaction K(+)(in) + H(+)(in) = K(+)(out) + H(+)(out). Transport of potassium into the cell. Likely operates as a K(+):H(+) symporter. The polypeptide is Probable potassium transport system protein Kup (Leuconostoc mesenteroides subsp. mesenteroides (strain ATCC 8293 / DSM 20343 / BCRC 11652 / CCM 1803 / JCM 6124 / NCDO 523 / NBRC 100496 / NCIMB 8023 / NCTC 12954 / NRRL B-1118 / 37Y)).